The sequence spans 418 residues: uncharacterized protein (418 aa).

10 helical membrane-spanning segments follow: residues 51-71 (FVMAVGGIAAIVAQTPIGALV), 79-99 (ALVVAGAVLVTAAAVAMPLFA), 110-130 (VTGIASSVFAPALAAITLGAV), 163-183 (FFGPVVVFWVLAGMALISVLA), 224-244 (VIFGAAVVAFHFANAAMLPLV), 258-278 (ALMSSCIVAAQVVMVPVAYVV), 289-309 (PIFLVGFAVLTARGFLYTLSD), 315-335 (VGVQLLDGIGAGIFGALFPLV), 356-376 (ATGIGAALSNLVAGWIVVVAG), and 379-399 (AAFMSLGALAGAGFLLYLVAM).

It belongs to the major facilitator superfamily.

It localises to the cell membrane. This is an uncharacterized protein from Mycobacterium tuberculosis (strain CDC 1551 / Oshkosh).